Consider the following 172-residue polypeptide: Large ribosomal subunit protein uL11m (172 aa).

It belongs to the universal ribosomal protein uL11 family.

The protein resides in the mitochondrion. This chain is Large ribosomal subunit protein uL11m (mrpl11), found in Dictyostelium discoideum (Social amoeba).